The sequence spans 220 residues: Claudin-22 (220 aa).

The Cytoplasmic portion of the chain corresponds to 1–10; it reads MGLVFRTATQ. A helical transmembrane segment spans residues 11-31; sequence AAALLLSLLGWVLSCLTNYLP. The Extracellular segment spans residues 32–81; sequence HWKNLNLELNEMENWTMGLWKSCVIQEEVGRQCKDFDSFLALPAELQVSR. A helical membrane pass occupies residues 82–102; sequence VLMSLCNGLGLLGLLASGCGL. Topologically, residues 103–120 are cytoplasmic; that stretch reads DCLRLGETQEGLKKRLLT. A helical membrane pass occupies residues 121–141; it reads LGGTLLWTSGVMVLVPVSWVA. Residues 142-164 lie on the Extracellular side of the membrane; the sequence is HKTVREFWDETMPEIVPRWEFGE. Residues 165 to 185 form a helical membrane-spanning segment; sequence ALFLGWFAGFCLVLGGCVLHC. At 186–220 the chain is on the cytoplasmic side; the sequence is AACWSPAPAASSHYAVAGPRDHQQHLELKQANPEI.

This sequence belongs to the claudin family.

It is found in the cell junction. It localises to the tight junction. Its subcellular location is the cell membrane. Plays a major role in tight junction-specific obliteration of the intercellular space, through calcium-independent cell-adhesion activity. The chain is Claudin-22 (Cldn22) from Mus musculus (Mouse).